The primary structure comprises 147 residues: Globin (147 aa).

The region spanning 2–147 is the Globin domain; the sequence is SFSAAQVDTV…SVANGIGQYQ (146 aa). Residues His-64 and His-95 each coordinate heme b.

This sequence belongs to the globin family. As to quaternary structure, homodimer or homooligomer.

This chain is Globin, found in Aequiyoldia eightsii (Antarctic yoldia).